A 376-amino-acid polypeptide reads, in one-letter code: Heterodimeric geranylgeranyl pyrophosphate synthase large subunit 2 (376 aa).

An N-terminal signal peptide occupies residues 1–24 (MEPQILFLYLSLFILSLNFFFTNL). Isopentenyl diphosphate contacts are provided by lysine 125, arginine 128, and histidine 157. Aspartate 164 and aspartate 170 together coordinate Mg(2+). Arginine 175 provides a ligand contact to dimethylallyl diphosphate. Arginine 176 is a binding site for isopentenyl diphosphate. 5 residues coordinate dimethylallyl diphosphate: lysine 261, threonine 262, glutamine 299, lysine 316, and lysine 326.

Belongs to the FPP/GGPP synthase family. In terms of assembly, monomer. Part of a heterodimeric geranyl(geranyl)diphosphate synthase. Interacts with GGR. The cofactor is Mg(2+). Mainly expressed in flowers.

Its subcellular location is the endoplasmic reticulum. It carries out the reaction isopentenyl diphosphate + dimethylallyl diphosphate = (2E)-geranyl diphosphate + diphosphate. It catalyses the reaction isopentenyl diphosphate + (2E)-geranyl diphosphate = (2E,6E)-farnesyl diphosphate + diphosphate. The enzyme catalyses isopentenyl diphosphate + (2E,6E)-farnesyl diphosphate = (2E,6E,10E)-geranylgeranyl diphosphate + diphosphate. It functions in the pathway isoprenoid biosynthesis; farnesyl diphosphate biosynthesis; farnesyl diphosphate from geranyl diphosphate and isopentenyl diphosphate: step 1/1. Its pathway is isoprenoid biosynthesis; geranyl diphosphate biosynthesis; geranyl diphosphate from dimethylallyl diphosphate and isopentenyl diphosphate: step 1/1. The protein operates within isoprenoid biosynthesis; geranylgeranyl diphosphate biosynthesis; geranylgeranyl diphosphate from farnesyl diphosphate and isopentenyl diphosphate: step 1/1. Its function is as follows. Heterodimeric geranyl(geranyl)-diphosphate (GPP) synthase large subunit. In vitro, the large subunit catalyzes mainly the trans-addition of the three molecules of IPP onto DMAPP to form geranylgeranyl pyrophosphate while the small subunit alone is inactive. Upon association of the two subunits, the product profile is not changed. The polypeptide is Heterodimeric geranylgeranyl pyrophosphate synthase large subunit 2 (GGPPS2) (Arabidopsis thaliana (Mouse-ear cress)).